The sequence spans 317 residues: ADIPOR-like receptor IZH1 (317 aa).

Residues 1–80 (MSEERGMKEQ…FNNESINIYT (80 aa)) lie on the Lumenal side of the membrane. An N-linked (GlcNAc...) asparagine glycan is attached at Asn-73. A helical membrane pass occupies residues 81-101 (HLIPGVAYLVLFLIFADLVLA). Over 102–113 (QLLPGLDAGEHR) the chain is Cytoplasmic. The helical transmembrane segment at 114–136 (MLRFYLLGAFTCLACSSCFHCLK) threads the bilayer. Topologically, residues 137–148 (QHSEPHSRLWSK) are lumenal. A helical membrane pass occupies residues 149–169 (VDYLGILAQITCSTISLLYYG). Topologically, residues 170 to 175 (YHSYPS) are cytoplasmic. The helical transmembrane segment at 176-196 (HFVFFSTLTVALCSACAVLVL) threads the bilayer. Asn-197 carries an N-linked (GlcNAc...) asparagine glycan. The Lumenal portion of the chain corresponds to 197–210 (NDSFNTVAFRPLRA). A helical transmembrane segment spans residues 211 to 231 (FLFMAFGLSGVIPVLAGSYQF). Residues 232 to 243 (GFAEWAARIQLK) are Cytoplasmic-facing. The helical transmembrane segment at 244-264 (YVLYEAVFYITGALVYGFRIP) threads the bilayer. The Lumenal portion of the chain corresponds to 265–283 (ERFAPGKFDMVGHSHQIFH). A helical membrane pass occupies residues 284 to 304 (LLVVLGTLCHFRAVTGSYIFI). Topologically, residues 305–317 (CTGKHYSSLLMFI) are cytoplasmic.

This sequence belongs to the ADIPOR family.

It localises to the endoplasmic reticulum membrane. In terms of biological role, ADIPOR-like receptor involved in zinc metabolism either by altering membrane sterol content or by directly altering cellular zinc levels. The chain is ADIPOR-like receptor IZH1 (IZH1) from Eremothecium gossypii (strain ATCC 10895 / CBS 109.51 / FGSC 9923 / NRRL Y-1056) (Yeast).